A 389-amino-acid polypeptide reads, in one-letter code: MKHYSATLALLPLTLALFLPQAAHAHGSMETPPSRVYGCFLEGPENPKSAACKAAVAAGGTQALYDWNGVNQGNANGNHQAVVPDGQLCGAGKALFKGLNLARSDWPSTAIAPDASGNFQFVYKASAPHATRYFDFYITKDGYNPEKPLAWSDLEPAPFCSITSVKLENGTYRMNCPLPQGKTGKHVIYNVWQRSDSPEAFYACIDVSFSGAVANPWQALGNLRAQQDLPAGATVTLRLFDAQGRDAQRHSLTLAQGNNGAKQWPLALAQKVNQDSTLVNIGVLDAYGAVSPVASSQDNQVYVRQAGYRFQVDIELPVEGGGEQPGGDGKVDFDYPQGLQQYDAGTVVRGADGKRYQCKPYPNSGWCKGWDLYYAPGKGMAWQDAWTLL.

The N-terminal stretch at 1–25 (MKHYSATLALLPLTLALFLPQAAHA) is a signal peptide. One can recognise a Chitin-binding type-4 domain in the interval 26–208 (HGSMETPPSR…EAFYACIDVS (183 aa)). Residue Tyr37 is modified to Phosphotyrosine. Ser210 carries the phosphoserine modification.

The protein localises to the secreted. Binds but does not hydrolyze chitin. The chain is Chitin-binding protein CbpD (cpbD) from Pseudomonas aeruginosa (strain UCBPP-PA14).